The chain runs to 68 residues: Large ribosomal subunit protein bL32 (68 aa).

The protein belongs to the bacterial ribosomal protein bL32 family.

This is Large ribosomal subunit protein bL32 from Cereibacter sphaeroides (strain ATCC 17025 / ATH 2.4.3) (Rhodobacter sphaeroides).